Consider the following 112-residue polypeptide: Protein BEX5 (112 aa).

Basic and acidic residues-rich tracts occupy residues 1 to 12 and 30 to 51; these read MEKDPKERREEE and PKPR…REDM. A disordered region spans residues 1–56; that stretch reads MEKDPKERREEEQAPVQNEEACPMGGGEGPKPRENVRGDWDPPAQDFREDMPNGLV. The tract at residues 101 to 105 is his cluster; sequence HHDHH. C109 serves as a coordination point for Zn(2+).

Belongs to the BEX family. Post-translationally, ubiquitinated. Degraded by the proteasome.

The protein resides in the cytoplasm. The protein is Protein BEX5 (BEX5) of Bos taurus (Bovine).